Consider the following 324-residue polypeptide: tRNA U34 carboxymethyltransferase (324 aa).

Carboxy-S-adenosyl-L-methionine contacts are provided by residues K92, W106, K111, G131, 153–155 (DPT), 181–182 (IE), M197, Y201, and R316.

This sequence belongs to the class I-like SAM-binding methyltransferase superfamily. CmoB family. In terms of assembly, homotetramer.

The enzyme catalyses carboxy-S-adenosyl-L-methionine + 5-hydroxyuridine(34) in tRNA = 5-carboxymethoxyuridine(34) in tRNA + S-adenosyl-L-homocysteine + H(+). Its function is as follows. Catalyzes carboxymethyl transfer from carboxy-S-adenosyl-L-methionine (Cx-SAM) to 5-hydroxyuridine (ho5U) to form 5-carboxymethoxyuridine (cmo5U) at position 34 in tRNAs. This chain is tRNA U34 carboxymethyltransferase, found in Methylococcus capsulatus (strain ATCC 33009 / NCIMB 11132 / Bath).